We begin with the raw amino-acid sequence, 239 residues long: MAFTTTAVVAPRGAKITGQSSTCAIQNGKTVAVGTSKQVGSFKPVFAAAKPAKETTFSVSCSAASDDVPDMGKRKLMNLLLLGAIAGPVAGAGGPFVSFLVPPKAGGGAGAGQAAKDALGNDVKVSSWLETHKPGDRSLAQGLKGDATYLIVKEDGTLENYGLNAVCTHLGCVVPWNASENKFMCPCHGSQYDRTGKVVRGPAPLSLALAHVSVLEDGVVAFEPWTETDFRTNTAPWWK.

A cyanelle-targeting transit peptide spans Met1 to Ser60. Residues Leu81 to Val101 form a helical membrane-spanning segment. In terms of domain architecture, Rieske spans Val125 to Ala221. [2Fe-2S] cluster contacts are provided by Cys167, His169, Cys185, and His188. A disulfide bridge links Cys172 with Cys187.

This sequence belongs to the Rieske iron-sulfur protein family. In terms of assembly, the 4 large subunits of the cytochrome b6-f complex are cytochrome b6, subunit IV (17 kDa polypeptide, petD), cytochrome f and the Rieske protein, while the 4 small subunits are petG, petL, petM and petN. The complex functions as a dimer. [2Fe-2S] cluster serves as cofactor.

The protein resides in the plastid. The protein localises to the cyanelle thylakoid membrane. It carries out the reaction 2 oxidized [plastocyanin] + a plastoquinol + 2 H(+)(in) = 2 reduced [plastocyanin] + a plastoquinone + 4 H(+)(out). Its function is as follows. Component of the cytochrome b6-f complex, which mediates electron transfer between photosystem II (PSII) and photosystem I (PSI), cyclic electron flow around PSI, and state transitions. The sequence is that of Cytochrome b6-f complex iron-sulfur subunit 1, cyanelle (petC-1) from Cyanophora paradoxa.